Reading from the N-terminus, the 492-residue chain is ATP synthase subunit beta, chloroplastic (492 aa).

An ATP-binding site is contributed by 170-177; the sequence is GGAGVGKT.

It belongs to the ATPase alpha/beta chains family. In terms of assembly, F-type ATPases have 2 components, CF(1) - the catalytic core - and CF(0) - the membrane proton channel. CF(1) has five subunits: alpha(3), beta(3), gamma(1), delta(1), epsilon(1). CF(0) has four main subunits: a(1), b(1), b'(1) and c(9-12).

It localises to the plastid. The protein resides in the chloroplast thylakoid membrane. It carries out the reaction ATP + H2O + 4 H(+)(in) = ADP + phosphate + 5 H(+)(out). In terms of biological role, produces ATP from ADP in the presence of a proton gradient across the membrane. The catalytic sites are hosted primarily by the beta subunits. In Psilotum nudum (Whisk fern), this protein is ATP synthase subunit beta, chloroplastic.